We begin with the raw amino-acid sequence, 329 residues long: Phosphatidylcholine:ceramide cholinephosphotransferase 3 (329 aa).

The Cytoplasmic segment spans residues 1–26 (MAVPPVEMYSGSFWNRMRKPLPLRTQ). A helical transmembrane segment spans residues 27-47 (VIRFTVVFVIVSFILAVALQI). At 48–74 (THERMPDPKVTKPLPDLGFELLTKVPG) the chain is on the extracellular side. A helical transmembrane segment spans residues 75 to 95 (MYVLADCCIGFLNILSVFTAF). Topologically, residues 96–147 (KLYLLHRHCVGSGEPELPCNIPGVSRFFLSVWLCKENCRIELRNIHTIAWIR) are cytoplasmic. A helical transmembrane segment spans residues 148–168 (FITSYALLLLFRSAVIVMTSL). Residues 169 to 211 (PAPDDLCQNPPKIENPVKNVILTVLTAGAGSIHCGDLMYSGHT) are Extracellular-facing. The chain crosses the membrane as a helical span at residues 212–232 (VILTLHLMFHWIYGAMVHWSF). Position 233 (R233) is a topological domain, cytoplasmic. The chain crosses the membrane as a helical span at residues 234-254 (PVVTVVAIFGYYCIVASRFHY). The Extracellular portion of the chain corresponds to 255-257 (TDD). Residues 258-278 (VLVAIYLTIATFIAVGHNADG) form a helical membrane-spanning segment. Over 279–329 (APWQLQLFIRWWPCCGANSREVTEDSQPVMVAFKSEAAGQSSRKVVDERNH) the chain is Cytoplasmic.

It belongs to the sphingomyelin synthase family.

It localises to the membrane. The catalysed reaction is an N-acylsphing-4-enine + a 1,2-diacyl-sn-glycero-3-phosphocholine = a sphingomyelin + a 1,2-diacyl-sn-glycerol. The enzyme catalyses an N-acylsphinganine + a 1,2-diacyl-sn-glycero-3-phosphocholine = an N-acylsphinganine-1-phosphocholine + a 1,2-diacyl-sn-glycerol. It carries out the reaction an N-acylsphing-4-enine + a 1,2-diacyl-sn-glycero-3-phosphoethanolamine = an N-acylsphing-4-enine 1-phosphoethanolamine + a 1,2-diacyl-sn-glycerol. It catalyses the reaction an N-acylsphinganine + a 1,2-diacyl-sn-glycero-3-phosphoethanolamine = an N-acylsphinganine-1-phosphoethanolamine + a 1,2-diacyl-sn-glycerol. In terms of biological role, bifunctional sphingomyelin (SM)/ethanolamine phosphorylceramide (EPC) synthase with minimal inositol phosphorylceramide (IPC) synthase activity. Specificity is likely to be defined by residues in the lumenal catalytic domain that interact with the polar head groups of the phospholipid donors. SM is synthesized by both stages of the parasite life cycle, bloodstream forms (BSF) and procyclic forms (PCF), by transferring the phosphocholine from a 1,2-diacyl-sn-glycero-3-phosphocholine to an N-acylsphing-4-enine (ceramide) or an N-acylsphinganine (dihydroceramide). Similarly, EPC is synthesized by transferring phosphoethanolamine from a 1,2-diacyl-sn-glycero-3-phosphoethanolamine to ceramide or dihydroceramide by BSF and PCF, while IPC is confined to PCF. The ceramide/dihydroceramide ratios are skewed towards dihydroceramide in PCF parasites and ceramide in BSF parasites, this is likely due to differential expression and/or regulation of dihydroceramide desaturase, the enzyme responsible for converting dihydroceramide to ceramide. The chain is Phosphatidylcholine:ceramide cholinephosphotransferase 3 from Trypanosoma brucei brucei.